Here is a 400-residue protein sequence, read N- to C-terminus: Glycerol-3-phosphate dehydrogenase [NAD(+)] 1 (400 aa).

Residues 50–55 (GSGNWG), Phe138, Lys161, and Ala194 contribute to the NAD(+) site. Substrate is bound at residue Lys161. Lys254 (proton acceptor) is an active-site residue. NAD(+) is bound by residues Arg319 and Gln348. 319-320 (RN) contacts substrate.

It belongs to the NAD-dependent glycerol-3-phosphate dehydrogenase family.

The enzyme catalyses sn-glycerol 3-phosphate + NAD(+) = dihydroxyacetone phosphate + NADH + H(+). The sequence is that of Glycerol-3-phosphate dehydrogenase [NAD(+)] 1 (GPD1) from Candida glabrata (strain ATCC 2001 / BCRC 20586 / JCM 3761 / NBRC 0622 / NRRL Y-65 / CBS 138) (Yeast).